Consider the following 326-residue polypeptide: NADH-specific methylglyoxal reductase (326 aa).

NAD(+)-binding positions include 20 to 21 (TW) and aspartate 54. Tyrosine 59 (proton donor) is an active-site residue. Residues glutamine 189, 217 to 222 (YSPLEQ), glycine 291, and glutamine 297 contribute to the NAD(+) site.

It belongs to the aldo/keto reductase family. Aldo/keto reductase 11 subfamily. As to quaternary structure, monomer.

It catalyses the reaction hydroxyacetone + NAD(+) = methylglyoxal + NADH + H(+). Catalyzes the NADH-dependent reduction of methylglyoxal (2-oxopropanal) in vitro. It is not known if this activity has physiological significance. Cannot use NADPH as a cosubstrate. Seems to play some role in intestinal colonization. The chain is NADH-specific methylglyoxal reductase (ydjG) from Escherichia coli (strain K12).